Here is a 488-residue protein sequence, read N- to C-terminus: GTPase Der (488 aa).

2 consecutive EngA-type G domains span residues 3 to 166 (PVVA…AEAM) and 200 to 373 (IKLA…DSAT). GTP is bound by residues 9–16 (GRPNVGKS), 56–60 (DTGGI), 118–121 (NKVD), 206–213 (GKPNVGKS), 253–257 (DTAGV), and 318–321 (NKWD). The KH-like domain occupies 374–458 (RRVSTSMLTR…PIQLRFHEGD (85 aa)).

This sequence belongs to the TRAFAC class TrmE-Era-EngA-EngB-Septin-like GTPase superfamily. EngA (Der) GTPase family. As to quaternary structure, associates with the 50S ribosomal subunit.

Its function is as follows. GTPase that plays an essential role in the late steps of ribosome biogenesis. This chain is GTPase Der, found in Shewanella amazonensis (strain ATCC BAA-1098 / SB2B).